The following is a 1440-amino-acid chain: MDDDVDAGEIYAVDRQREEGSASAAAFSRSPSTGRVDDDDDDLLTYGRSARRMAALPAPAMPEGTELRRPVGGDVVGDDDYLRFLYKFKELFDRVGIKLPTIEVRYKNLNVEAESYVGSRGLPTILNTYANILKGLANTLHMTTRSKQKISVLHNASGIIKPHRMTLLLGSPGSGKTSLLLALAGTLPSTVKVSGMITYNGHTMDKFIPQRSAAYVSQHDLHMAELTVRETINFSAKCQGVGHHYDLFLELLRREEEENITPDPETDIYLKAATTGEEKAEIVTNHILKILRLDICADTIVGDNMLRGISGGQKRCLDAHTAPNVDSAAEMLVTLGRALFMDEISNGLDSSTTFQIVNTIQQTIHVLGGTAVIALLQPAPETYELFDDIILLSDGQVVYSGPRDHVLEFFKSLGFKCLERIGVADFLQEVTSRKDQKQYWIHGDDTYRYIPVTVIAEAFQCFHVGQAIRSELAIPFDNSKSHIAALKTSKHGVNLKKILKANIDREILLLKRKSFLYIFNALQLTLVAIIAMSVFIHTNMHHDSIENGRMYMGVQFFGTLAIMFKGLAEMGAALANLPVFFKQRDLLFYPAWTYSLPSWIIKTPISFLNTIIWVSITYYVIGFDPNIERCFRQFLVLFVMSEAICGLFRFIAALTRHPVVASTVSEFCILIVMVSSGFILSRDEVKKWLIWEYWTSPLMYALNALAVNEFLSPSWNEALPGFREPLGRLVLESRGVFPEAKWYWIGLGALLGYVLLFNILYTICLSILTLLKRNVREMSQETLQIKLENLTGYDQEPSSGGRVTNDKRYTEGGNNDEATSSNANHNSSPARKGSILPFVPVYMTFEDIRYSIDMPKALKVQGMAGSRLELLKDLSGSFRPGVLTALMGISGAGKTTLLDVLAGRKTSGHIHGNITVSGYPKKQETFSRVSGYCEQNDIHSPNLTVYESLMFSAWLRLPAEIDSMARKRFIDEFMELVELFPLKDALVGLLGLSGLSTEQRKRLTIAVELVANPSIIFMDEPTSGLDARAAAIVMRTVRNIVDMGRTVVCTIHQPSIDIFESFDELFLMKRGGEAIYVGPLGQHSCELIKYFESIEGVRKIKHGYNPSTWMLEVTCTLQEQITGVNFTQVYKNSELYRRNKNLIKELSTPHDGSSDLLFPTKYSQTFVIQCLACLWKQRLSYWRNPPYIAVNFFFTVVIALLFGTMFWGVGRKRQSQQALLSAMGSMYSTCFTLGVQNSSSVQPVVNIERTVFYRERASHMYSPLPYALGQVVVELPYIFLQTLIYGVIVYSMMGYEWTCTKFFWYMFFMYFTLSYFTFYGMMAAGLTPNYTMSSIVSTTFYAIWHLFSGFLIPKTRIPIWWRWYYWICPVAWTINGLVTSQFGDVDDKFDNGVRVSDFVESYFGYNLDLLWVAAMAVVSFAILFAILFGFSLKLFNFQKR.

The segment at 1–42 (MDDDVDAGEIYAVDRQREEGSASAAAFSRSPSTGRVDDDDDD) is disordered. Residues 21-32 (SASAAAFSRSPS) show a composition bias toward low complexity. Residues 137–419 (ANTLHMTTRS…FKSLGFKCLE (283 aa)) form the ABC transporter 1 domain. 170-177 (GSPGSGKT) is a binding site for ATP. An ABC transmembrane type-2 1 domain is found at 497 to 710 (KILKANIDRE…ALNALAVNEF (214 aa)). Helical transmembrane passes span 516–536 (LYIFNALQLTLVAIIAMSVFI), 561–581 (AIMFKGLAEMGAALANLPVFF), 603–623 (TPISFLNTIIWVSITYYVIGF), 634–654 (FLVLFVMSEAICGLFRFIAAL), 659–679 (VVASTVSEFCILIVMVSSGFI), 688–708 (WLIWEYWTSPLMYALNALAVN), and 745–765 (IGLGALLGYVLLFNILYTICL). Residues 794 to 829 (DQEPSSGGRVTNDKRYTEGGNNDEATSSNANHNSSP) are disordered. A compositionally biased stretch (polar residues) spans 812 to 829 (GGNNDEATSSNANHNSSP). The ABC transporter 2 domain occupies 843–1095 (MTFEDIRYSI…ELIKYFESIE (253 aa)). 888–895 (GISGAGKT) is an ATP binding site. The region spanning 1168-1382 (IQCLACLWKQ…TINGLVTSQF (215 aa)) is the ABC transmembrane type-2 2 domain. A run of 7 helical transmembrane segments spans residues 1188–1208 (IAVNFFFTVVIALLFGTMFWG), 1219–1236 (LLSAMGSMYSTCFTLGVQ), 1271–1291 (VVVELPYIFLQTLIYGVIVYS), 1302–1322 (FFWYMFFMYFTLSYFTFYGMM), 1332–1352 (MSSIVSTTFYAIWHLFSGFLI), 1357–1377 (IPIWWRWYYWICPVAWTINGL), and 1410–1430 (LWVAAMAVVSFAILFAILFGF).

Belongs to the ABC transporter superfamily. ABCG family. PDR (TC 3.A.1.205) subfamily.

It is found in the membrane. Its function is as follows. May be a general defense protein. The protein is ABC transporter G family member 46 of Oryza sativa subsp. japonica (Rice).